Here is a 429-residue protein sequence, read N- to C-terminus: Endoglucanase type C (429 aa).

An N-terminal signal peptide occupies residues 1-18; it reads MKSLSLILSALAVQVAVA. Pyrrolidone carboxylic acid is present on Gln19. 9 disulfides stabilise this stretch: Cys36–Cys42, Cys66–Cys88, Cys78–Cys84, Cys156–Cys383, Cys190–Cys213, Cys194–Cys212, Cys233–Cys252, Cys241–Cys246, and Cys257–Cys333. An N-linked (GlcNAc...) asparagine glycan is attached at Asn74. Glu215 functions as the Nucleophile in the catalytic mechanism. Catalysis depends on Glu220, which acts as the Proton donor. N-linked (GlcNAc...) asparagine glycans are attached at residues Asn265 and Asn318.

The protein belongs to the glycosyl hydrolase 7 (cellulase C) family.

It carries out the reaction Endohydrolysis of (1-&gt;4)-beta-D-glucosidic linkages in cellulose, lichenin and cereal beta-D-glucans.. The protein is Endoglucanase type C of Fusarium oxysporum (Fusarium vascular wilt).